Reading from the N-terminus, the 615-residue chain is Sterol 3-beta-glucosyltransferase UGT80B1 (615 aa).

Positions methionine 1–histidine 54 are disordered. Residues aspartate 40–histidine 54 show a composition bias toward basic and acidic residues.

Belongs to the glycosyltransferase 28 family. In terms of tissue distribution, expressed in developing seeds, seedlings, leaves and around the apical tip of cotyledons. In embryo, expressed in the seed coat and cotyledons.

It carries out the reaction a sterol + UDP-alpha-D-glucose = a sterol 3-beta-D-glucoside + UDP + H(+). In terms of biological role, involved in the biosynthesis of sterol glucosides. Catalyzes the synthesis of steryl glycosides (SGs) and acyl steryl glycosides (ASGs) which are the most abundant sterol derivatives in higher plants. Can act on several sterols like sitosterol, campesterol and stigmasterol. Is required for embryonic development, seed suberin accumulation, cutin formation and flavanoid accumulation in the seed coat. Both UGT80A2 and UGT80B1 are required for the normal production of SGs and ASGs in seeds. This chain is Sterol 3-beta-glucosyltransferase UGT80B1, found in Arabidopsis thaliana (Mouse-ear cress).